A 361-amino-acid chain; its full sequence is Chorismate synthase (361 aa).

NADP(+) contacts are provided by Arg-48 and Arg-54. FMN-binding positions include 125-127, 238-239, Gly-278, 293-297, and Arg-319; these read RSS, NA, and KPTSS.

This sequence belongs to the chorismate synthase family. In terms of assembly, homotetramer. It depends on FMNH2 as a cofactor.

The enzyme catalyses 5-O-(1-carboxyvinyl)-3-phosphoshikimate = chorismate + phosphate. The protein operates within metabolic intermediate biosynthesis; chorismate biosynthesis; chorismate from D-erythrose 4-phosphate and phosphoenolpyruvate: step 7/7. In terms of biological role, catalyzes the anti-1,4-elimination of the C-3 phosphate and the C-6 proR hydrogen from 5-enolpyruvylshikimate-3-phosphate (EPSP) to yield chorismate, which is the branch point compound that serves as the starting substrate for the three terminal pathways of aromatic amino acid biosynthesis. This reaction introduces a second double bond into the aromatic ring system. The protein is Chorismate synthase of Escherichia coli O7:K1 (strain IAI39 / ExPEC).